Here is a 767-residue protein sequence, read N- to C-terminus: 5-methyltetrahydropteroyltriglutamate--homocysteine methyltransferase (767 aa).

A 5-methyltetrahydropteroyltri-L-glutamate-binding site is contributed by Lys-19. Ser-89 is subject to Phosphoserine. Asn-126 contacts 5-methyltetrahydropteroyltri-L-glutamate. The residue at position 242 (Ser-242) is a Phosphoserine. L-homocysteine-binding positions include Ile-444–Ser-446 and Glu-497. Residues Ile-444–Ser-446 and Glu-497 contribute to the L-methionine site. 5-methyltetrahydropteroyltri-L-glutamate is bound by residues Asp-502, Tyr-525, and Arg-528–Tyr-529. A Phosphothreonine modification is found at Thr-566. A 5-methyltetrahydropteroyltri-L-glutamate-binding site is contributed by Trp-574. Asp-612 provides a ligand contact to L-homocysteine. Asp-612 lines the L-methionine pocket. Ser-629 is subject to Phosphoserine. Zn(2+)-binding residues include His-655, Cys-657, and Glu-677. Catalysis depends on His-705, which acts as the Proton donor. Ser-706 carries the phosphoserine modification. Cys-737 serves as a coordination point for Zn(2+).

Belongs to the vitamin-B12 independent methionine synthase family. Zn(2+) is required as a cofactor.

It catalyses the reaction 5-methyltetrahydropteroyltri-L-glutamate + L-homocysteine = tetrahydropteroyltri-L-glutamate + L-methionine. Its pathway is amino-acid biosynthesis; L-methionine biosynthesis via de novo pathway; L-methionine from L-homocysteine (MetE route): step 1/1. Catalyzes the transfer of a methyl group from 5-methyltetrahydrofolate to homocysteine resulting in methionine formation. The sequence is that of 5-methyltetrahydropteroyltriglutamate--homocysteine methyltransferase (MET6) from Saccharomyces cerevisiae (strain ATCC 204508 / S288c) (Baker's yeast).